A 108-amino-acid polypeptide reads, in one-letter code: Iron-sulfur cluster assembly protein CyaY (108 aa).

It belongs to the frataxin family.

In terms of biological role, involved in iron-sulfur (Fe-S) cluster assembly. May act as a regulator of Fe-S biogenesis. The polypeptide is Iron-sulfur cluster assembly protein CyaY (Pseudoalteromonas atlantica (strain T6c / ATCC BAA-1087)).